Reading from the N-terminus, the 655-residue chain is Ubiquilin-3 (655 aa).

A Ubiquitin-like domain is found at 22 to 98; sequence IKVTVKTPKD…LVIKRQHRAM (77 aa). Positions 102–124 are disordered; sequence CPAASVPTQGPSPGSLPQPSSIY. Low complexity predominate over residues 110-122; that stretch reads QGPSPGSLPQPSS. Positions 194–233 constitute an STI1 domain; it reads NPHMQQLIQHNPEIGHILNNPEIMRQTLEFLRNPAMMQEM. Disordered regions lie at residues 277–330, 364–399, and 412–447; these read PFAT…PDIR, ASAL…LPEE, and FLRY…LVSG. A compositionally biased stretch (low complexity) spans 279–290; it reads ATATTDNATTTT. The segment covering 318–330 has biased composition (basic and acidic residues); the sequence is GRQDGDQDAPDIR. Low complexity predominate over residues 377–395; it reads VNRVPPSSPSSQEPGSGQP. Residues 432–441 are compositionally biased toward polar residues; sequence KSSTGHSTNL. Residues 609 to 655 enclose the UBA domain; the sequence is QLQPEAHFQVQLEQLRSMGFLNREANLQALIATGGDVDAAVEKLRQS.

Testis specific.

The protein is Ubiquilin-3 (UBQLN3) of Homo sapiens (Human).